Here is a 517-residue protein sequence, read N- to C-terminus: Glycerol kinase (517 aa).

Position 24 (T24) interacts with ADP. 3 residues coordinate ATP: T24, T25, and S26. A sn-glycerol 3-phosphate-binding site is contributed by T24. R28 is an ADP binding site. Residues R94, E95, Y146, and D261 each coordinate sn-glycerol 3-phosphate. Glycerol-binding residues include R94, E95, Y146, D261, and Q262. Positions 283 and 327 each coordinate ADP. ATP-binding residues include T283, G327, Q331, and G428. The ADP site is built by G428 and N432.

It belongs to the FGGY kinase family.

It catalyses the reaction glycerol + ATP = sn-glycerol 3-phosphate + ADP + H(+). It functions in the pathway polyol metabolism; glycerol degradation via glycerol kinase pathway; sn-glycerol 3-phosphate from glycerol: step 1/1. Its activity is regulated as follows. Inhibited by fructose 1,6-bisphosphate (FBP). In terms of biological role, key enzyme in the regulation of glycerol uptake and metabolism. Catalyzes the phosphorylation of glycerol to yield sn-glycerol 3-phosphate. The protein is Glycerol kinase of Mycobacterium tuberculosis (strain ATCC 25177 / H37Ra).